The sequence spans 548 residues: MSASLNYKSFSKEQQTMDNLEKQLICPICLEMFTKPVVILPCQHNLCRKCASDIFQASNPYLPTRGGTTMASGGRFRCPSCRHEVVLDRHGVYGLQRNLLVENIIDIYKQESTRPEKKSDQPMCEEHEEERINIYCLNCEVPTCSLCKVFGAHKDCQVAPLTHVFQRQKSELSDGIAILVGSNDRVQGVISQLEDTCKTIEECCRKQKQELCEKFDYLYGILEERKNEMTQVITRTQEEKLEHVRALIKKYSDHLENVSKLVESGIQFMDEPEMAVFLQNAKTLLKKISEASKAFQMEKIEHGYENMNHFTVNLNREEKIIREIDFYREDEDEEEEEGGEGEKEGEGEVGGEAVEVEEVENVQTEFPGEDENPEKASELSQVELQAAPGALPVSSPEPPPALPPAADAPVTQGEVVPTGSEQTTESETPVPAAAETADPLFYPSWYKGQTRKATTNPPCTPGSEGLGQIGPPGSEDSNVRKAEVAAAAASERAAVSGKETSAPAATSQIGFEAPPLQGQAAAPASGSGADSEPARHIFSFSWLNSLNE.

Residues 10–66 form an RING-type zinc finger; that stretch reads FSKEQQTMDNLEKQLICPICLEMFTKPVVILPCQHNLCRKCASDIFQASNPYLPTRG. The B box-type zinc finger occupies 103–145; that stretch reads NIIDIYKQESTRPEKKSDQPMCEEHEEERINIYCLNCEVPTCS. Residues C124, H127, C147, and H153 each contribute to the Zn(2+) site. Positions 168 to 248 form a coiled coil; sequence QKSELSDGIA…EKLEHVRALI (81 aa). Residues 269-327 enclose the COS domain; sequence MDEPEMAVFLQNAKTLLKKISEASKAFQMEKIEHGYENMNHFTVNLNREEKIIREIDFY. The segment at 326–532 is disordered; that stretch reads FYREDEDEEE…PASGSGADSE (207 aa). Acidic residues-rich tracts occupy residues 328-339 and 347-360; these read REDEDEEEEEGG and GEVG…EEVE. Low complexity-rich tracts occupy residues 484 to 496 and 512 to 531; these read VAAA…AAVS and EAPP…GADS.

Homooligomer and heterooligomer. Interacts with titin/TTN. Interacts with myosins. Interacts with SQSTM1 and NBR1. Isoform 4 may not able to interact with isoform 1, isoform 2 and isoform 3. Probably interacts with TRIM63 and TRIM54. Targeted for degradation through the proteasomal and lysosomal pathways in the presence of SUMO3. In terms of tissue distribution, highly expressed in muscle. Low-level expression in liver.

Its subcellular location is the nucleus. It localises to the cytoplasm. The enzyme catalyses S-ubiquitinyl-[E2 ubiquitin-conjugating enzyme]-L-cysteine + [acceptor protein]-L-lysine = [E2 ubiquitin-conjugating enzyme]-L-cysteine + N(6)-ubiquitinyl-[acceptor protein]-L-lysine.. E3 ubiquitin ligase that plays an important role in regulating cardiac development and contractility, muscle growth, metabolism, and fiber-type differentiation. Acts as a critical factor that regulates cardiomyocyte size during development in concert with TRIM63 by regulating E2F1-mediated gene expression. Plays a role in apoptosis induction in cardiomyocytes by promoting ubiquitination of the DUSP1 phosphatase. Promotes non-canonical NF-kappa-B signaling and B-cell-mediated immune responses by mediating NFKB2 'Lys-48'-linked ubiquitination and processing. In turn, NFKB2 is further processed by valosin-containing protein/VCP, an ATPase that mediates ubiquitin-dependent protein degradation by the proteasome. May play a role in preventing macrophages from producing inflammatory factors and migrating by downregulating the level of nuclear NF-kappa-B subunit RELA. Also modifies PPARG via polyubiquitination and accelerates PPARG proteasomal degradation to inhibit its activity. The polypeptide is Tripartite motif-containing protein 55 (TRIM55) (Homo sapiens (Human)).